Consider the following 287-residue polypeptide: mRNA-capping enzyme regulatory subunit OPG124 (287 aa).

Belongs to the orthopoxvirus mRNA-capping enzyme regulatory subunit family. In terms of assembly, interacts with the catalytic subunit OPG113.

The protein resides in the virion. Regulatory subunit of the mRNA cap enzyme which stabilizes the catalytic subunit and enhances its methyltransferase activity through an allosteric mechanism. Heterodimeric mRNA capping enzyme catalyzes the linkage of a N7-methyl-guanosine moiety to the first transcribed nucleotide (cap 0 structure), whereas the methyltransferase OPG102 is responsible for a second methylation at the 2'-O position of the ribose (cap 1 structure). Also involved in early viral gene transcription termination and intermediate viral gene transcription initiation. Early gene transcription termination requires the termination factor VTF, the DNA-dependent ATPase NPH-I/OPG123 and the RAP94/OPG109 subunit of the viral RNA polymerase, as well as the presence of a specific termination motif. Binds, together with RAP94/OPG109, to the termination motif 5'-UUUUUNU-3' in the nascent early mRNA. The polypeptide is mRNA-capping enzyme regulatory subunit OPG124 (OPG124) (Variola virus (isolate Human/India/Ind3/1967) (VARV)).